Consider the following 412-residue polypeptide: Multifunctional CCA protein (412 aa).

ATP-binding residues include glycine 8 and arginine 11. CTP-binding residues include glycine 8 and arginine 11. 2 residues coordinate Mg(2+): aspartate 21 and aspartate 23. ATP-binding residues include arginine 91, arginine 137, and arginine 140. CTP is bound by residues arginine 91, arginine 137, and arginine 140. Residues 228–329 enclose the HD domain; the sequence is TGIHTLMTLS…VKLFDSIDAW (102 aa).

Belongs to the tRNA nucleotidyltransferase/poly(A) polymerase family. Bacterial CCA-adding enzyme type 1 subfamily. As to quaternary structure, monomer. Can also form homodimers and oligomers. Mg(2+) is required as a cofactor. Requires Ni(2+) as cofactor.

The catalysed reaction is a tRNA precursor + 2 CTP + ATP = a tRNA with a 3' CCA end + 3 diphosphate. The enzyme catalyses a tRNA with a 3' CCA end + 2 CTP + ATP = a tRNA with a 3' CCACCA end + 3 diphosphate. In terms of biological role, catalyzes the addition and repair of the essential 3'-terminal CCA sequence in tRNAs without using a nucleic acid template. Adds these three nucleotides in the order of C, C, and A to the tRNA nucleotide-73, using CTP and ATP as substrates and producing inorganic pyrophosphate. tRNA 3'-terminal CCA addition is required both for tRNA processing and repair. Also involved in tRNA surveillance by mediating tandem CCA addition to generate a CCACCA at the 3' terminus of unstable tRNAs. While stable tRNAs receive only 3'-terminal CCA, unstable tRNAs are marked with CCACCA and rapidly degraded. The protein is Multifunctional CCA protein of Escherichia coli O157:H7.